A 288-amino-acid polypeptide reads, in one-letter code: Extracellular ribonuclease (288 aa).

The N-terminal stretch at 1–26 (MTKKAWFLPLVCVLLISGWLAPAASA) is a signal peptide.

The protein localises to the secreted. In terms of biological role, mg(2+)-activated ribonuclease which hydrolyzes RNA apparently nonspecifically into oligonucleotides with 5'-terminal phosphate. This Bacillus subtilis (strain 168) protein is Extracellular ribonuclease (bsn).